A 253-amino-acid chain; its full sequence is Imidazole glycerol phosphate synthase subunit HisF (253 aa).

Residues Asp-11 and Asp-130 contribute to the active site.

This sequence belongs to the HisA/HisF family. Heterodimer of HisH and HisF.

It localises to the cytoplasm. The enzyme catalyses 5-[(5-phospho-1-deoxy-D-ribulos-1-ylimino)methylamino]-1-(5-phospho-beta-D-ribosyl)imidazole-4-carboxamide + L-glutamine = D-erythro-1-(imidazol-4-yl)glycerol 3-phosphate + 5-amino-1-(5-phospho-beta-D-ribosyl)imidazole-4-carboxamide + L-glutamate + H(+). The protein operates within amino-acid biosynthesis; L-histidine biosynthesis; L-histidine from 5-phospho-alpha-D-ribose 1-diphosphate: step 5/9. IGPS catalyzes the conversion of PRFAR and glutamine to IGP, AICAR and glutamate. The HisF subunit catalyzes the cyclization activity that produces IGP and AICAR from PRFAR using the ammonia provided by the HisH subunit. The sequence is that of Imidazole glycerol phosphate synthase subunit HisF from Clostridium beijerinckii (strain ATCC 51743 / NCIMB 8052) (Clostridium acetobutylicum).